The sequence spans 363 residues: Protein CPn_1058/CP_0792/CPj1058/CpB1100 (363 aa).

Positions 1–27 (MKLYQTLRGIVLVSTGCIFLGMHGGYA) are cleaved as a signal peptide.

This sequence belongs to the chlamydial CPn_1058/CT_355/TC_0634 family.

This Chlamydia pneumoniae (Chlamydophila pneumoniae) protein is Protein CPn_1058/CP_0792/CPj1058/CpB1100.